A 598-amino-acid polypeptide reads, in one-letter code: Arginine--tRNA ligase (598 aa).

The 'HIGH' region signature appears at 135–145 (ANPTGPIHIGG). The tract at residues 229–248 (VDGGTDEKGEPLGEGDSEQR) is disordered. The segment covering 231 to 248 (GGTDEKGEPLGEGDSEQR) has biased composition (basic and acidic residues).

Belongs to the class-I aminoacyl-tRNA synthetase family. As to quaternary structure, monomer.

The protein resides in the cytoplasm. The catalysed reaction is tRNA(Arg) + L-arginine + ATP = L-arginyl-tRNA(Arg) + AMP + diphosphate. This Bifidobacterium animalis subsp. lactis (strain AD011) protein is Arginine--tRNA ligase.